Here is a 325-residue protein sequence, read N- to C-terminus: Forkhead box protein B1 (325 aa).

Residues 12–103 (QKPPYSYISL…GDMFENGSFL (92 aa)) constitute a DNA-binding region (fork-head). Low complexity predominate over residues 284 to 309 (LSNSPPSLSPTSSQTATSQSSPATPS). The tract at residues 284 to 325 (LSNSPPSLSPTSSQTATSQSSPATPSETLTSPASALHSVAVH) is disordered.

It localises to the nucleus. In terms of biological role, transcription factor expressed by neural progenitor cells in specific regions of the embryonic neuroepithelium. Essential for the mammillary nuclei maintenance. Negatively regulates the proliferation of oligodendrocyte progenitors and promotes oligodendrocyte maturation. Also expressed in mammary glands, plays a role in lactation, controls development of mammary glands and the inferior colliculi of the midbrain in the central nervous system that regulates the milk-ejection reflex. The protein is Forkhead box protein B1 (FOXB1) of Homo sapiens (Human).